Here is a 737-residue protein sequence, read N- to C-terminus: MAAPTREEWRHLDPSQRNLYRDVMLETYSHLLSVGYQVPEAEVVMLEQGKEPWALQGERPRQSCPGKKLWDHNQCRKILSYKQVSSQPQKMYPGEKPYECAEFEKIFTQKSQLKVHLKVLAGEKLYVCIECGKAFVQKPEFIIHQKTHMREKPFKCNECGKSFFQVSSLFRHQRIHTGEKLYECSQCGKGFSYNSDLSIHEKIHTGERHHECTDCGKAFTQKSTLKMHQKIHTGERSYICIECGQAFIQKTHLIAHRRIHTGEKPYECSNCGKSFISKSQLQVHQRVHTRVKPYICTEYGKVFSNNSNLITHKKVQSREKSSICTECGKAFTYRSELIIHQRIHTGEKPYACSDCGKAFTQKSALTVHQRIHTGEKSYICMKCGLAFIQKAHLIAHQIIHTGEKPYKCGHCGKLFTSKSQLHVHKRIHTGEKPYMCNKCGKAFTNRSNLITHQKTHTGEKSYICSKCGKAFTQRSDLITHQRIHTGEKPYECSTCGKAFTQKSHLNIHQKIHTGERQYECHECGKAFNQKSILIVHQKIHTGEKPYVCTECGRAFIRKSNFITHQRIHTGEKPYECSDCGKSFTSKSQLLVHQPLHTGEKPYVCAECGKAFSGRSNLSKHQKTHTGEKPYICSECGKTFRQKSELITHHRIHTGEKPYECSDCGKSFTKKSQLQVHQRIHTGEKPYVCAECGKAFTDRSNLNKHQTTHTGDRPYKCGICGKGFVQKSVFSVHQSNHA.

Residues 1 to 65 (MAAPTREEWR…QGERPRQSCP (65 aa)) form the KRAB domain. 6 C2H2-type zinc fingers span residues 126–148 (YVCI…QKTH), 154–176 (FKCN…QRIH), 182–204 (YECS…EKIH), 210–232 (HECT…QKIH), 238–260 (YICI…RRIH), and 266–288 (YECS…QRVH). Residues 294–316 (YICTEYGKVFSNNSNLITHKKVQ) form a C2H2-type 7; degenerate zinc finger. 15 C2H2-type zinc fingers span residues 322 to 344 (SICT…QRIH), 350 to 372 (YACS…QRIH), 378 to 400 (YICM…QIIH), 406 to 428 (YKCG…KRIH), 434 to 456 (YMCN…QKTH), 462 to 484 (YICS…QRIH), 490 to 512 (YECS…QKIH), 518 to 540 (YECH…QKIH), 546 to 568 (YVCT…QRIH), 574 to 596 (YECS…QPLH), 602 to 624 (YVCA…QKTH), 630 to 652 (YICS…HRIH), 658 to 680 (YECS…QRIH), 686 to 708 (YVCA…QTTH), and 714 to 736 (YKCG…QSNH).

This sequence belongs to the krueppel C2H2-type zinc-finger protein family.

It is found in the nucleus. Functionally, may be involved in transcriptional regulation. This chain is Zinc finger protein 585A (ZNF585A), found in Pongo abelii (Sumatran orangutan).